An 885-amino-acid chain; its full sequence is DNA mismatch repair protein MutS (885 aa).

An ATP-binding site is contributed by 626–633 (GPNMGGKS).

Belongs to the DNA mismatch repair MutS family.

In terms of biological role, this protein is involved in the repair of mismatches in DNA. It is possible that it carries out the mismatch recognition step. This protein has a weak ATPase activity. The protein is DNA mismatch repair protein MutS of Burkholderia lata (strain ATCC 17760 / DSM 23089 / LMG 22485 / NCIMB 9086 / R18194 / 383).